A 279-amino-acid polypeptide reads, in one-letter code: Pantothenate synthetase (279 aa).

ATP is bound at residue 26–33; it reads MGNLHDGH. The active-site Proton donor is histidine 33. Residue glutamine 57 participates in (R)-pantoate binding. Glutamine 57 provides a ligand contact to beta-alanine. 144 to 147 serves as a coordination point for ATP; it reads GKKD. Residue glutamine 150 participates in (R)-pantoate binding. 181-184 is a binding site for ATP; the sequence is LSSR.

The protein belongs to the pantothenate synthetase family. In terms of assembly, homodimer.

It localises to the cytoplasm. The catalysed reaction is (R)-pantoate + beta-alanine + ATP = (R)-pantothenate + AMP + diphosphate + H(+). It functions in the pathway cofactor biosynthesis; (R)-pantothenate biosynthesis; (R)-pantothenate from (R)-pantoate and beta-alanine: step 1/1. Catalyzes the condensation of pantoate with beta-alanine in an ATP-dependent reaction via a pantoyl-adenylate intermediate. The protein is Pantothenate synthetase of Herminiimonas arsenicoxydans.